The following is a 109-amino-acid chain: Iron-sulfur cluster assembly protein CyaY (109 aa).

It belongs to the frataxin family.

Functionally, involved in iron-sulfur (Fe-S) cluster assembly. May act as a regulator of Fe-S biogenesis. This is Iron-sulfur cluster assembly protein CyaY from Bordetella avium (strain 197N).